The sequence spans 279 residues: Thymidylate synthase 1 (279 aa).

Arg141–Arg142 lines the dUMP pocket. Cys161 serves as the catalytic Nucleophile. DUMP-binding positions include Arg181–Asp184, Asn192, and His222–Tyr224. Asp184 is a (6R)-5,10-methylene-5,6,7,8-tetrahydrofolate binding site. Residue Ala278 coordinates (6R)-5,10-methylene-5,6,7,8-tetrahydrofolate.

The protein belongs to the thymidylate synthase family. Bacterial-type ThyA subfamily. As to quaternary structure, homodimer.

It localises to the cytoplasm. The enzyme catalyses dUMP + (6R)-5,10-methylene-5,6,7,8-tetrahydrofolate = 7,8-dihydrofolate + dTMP. The protein operates within pyrimidine metabolism; dTTP biosynthesis. In terms of biological role, catalyzes the reductive methylation of 2'-deoxyuridine-5'-monophosphate (dUMP) to 2'-deoxythymidine-5'-monophosphate (dTMP) while utilizing 5,10-methylenetetrahydrofolate (mTHF) as the methyl donor and reductant in the reaction, yielding dihydrofolate (DHF) as a by-product. This enzymatic reaction provides an intracellular de novo source of dTMP, an essential precursor for DNA biosynthesis. This chain is Thymidylate synthase 1, found in Bacillus subtilis (strain 168).